A 122-amino-acid polypeptide reads, in one-letter code: Small ribosomal subunit protein bS6 (122 aa).

The interval 99 to 122 is disordered; it reads PSPMMKEVAREEAKKAAAQTEQAA.

It belongs to the bacterial ribosomal protein bS6 family.

Binds together with bS18 to 16S ribosomal RNA. The sequence is that of Small ribosomal subunit protein bS6 from Ralstonia pickettii (strain 12J).